Consider the following 413-residue polypeptide: Synaptosomal-associated protein 47 (413 aa).

The region spanning alanine 109 to leucine 171 is the t-SNARE coiled-coil homology 1 domain. A disordered region spans residues arginine 321 to glutamate 342. One can recognise a t-SNARE coiled-coil homology 2 domain in the interval lysine 350–leucine 412.

The protein belongs to the SVAP1 family. As to quaternary structure, associates with the BLOC-1 complex. Interacts with BLOC1S6. Forms a complex containing SNAP47, VAMP2 and STX1A. As to expression, ubiquitously expressed with the most abundant expression in the brain. In brain, most highly expressed in the glomerular layer of the olfactory bulb, the cortex, striatum, hippocampus, and colliculi (at protein level).

It is found in the endomembrane system. Its subcellular location is the cytoplasm. It localises to the perinuclear region. May play a role in intracellular membrane fusion. The polypeptide is Synaptosomal-associated protein 47 (Snap47) (Mus musculus (Mouse)).